We begin with the raw amino-acid sequence, 873 residues long: MSDSDKELENQIIEAGEKLIDPPSSLDELLSFLDKLFVSLAEVEQSPPDSMQNALTPLMKGLVGGKLFKHSDVDVKVAVAACISEITRITAPDAPYDDDQMKEVFKLIVSSFEDLVDKSSRSYAKRISILETVAKVRSCVVMLDLECDALLIEMFQHFLKAIRDHHSGNVFSSMENIMTLVLEESEDIPSEMLSPILHSVKKDDEISQVSRRLAEQVLSNCASKLKTYLTEAVKSSGVPLDKYSNIVASICEGTFSALQQDQVVANEKEDSQGHIKRETEVEKAAEISTPERTDAPKDESGKSGVSNGVAQQNDSSVDTDSMKKQDDTGAKDEPQQLDNPRNTDLNNTTEEKPDVEHQIEEKENESSSVKQADLSKDSDIKEETEPAELLDSKDVLTSPPVDSSVTAATSSENEKNKSVQILPSKTSGDETANVSSPSMAEELPEQSVPKKTANQKKKESSTEEVKPSASIATEEVSEEPNTSEPQVTKKSGKKVASSSKTKPTVPPSKKSTSETKVAKQSEKKVVGSDNAQESTKPKEEKKKPGRGKAIDEESLHTSSGDNEKPAVSSGKLASKSKKEAKQTVEESPNSNTKRKRSLGQGKASGESLVGSRIKVWWPMDQAYYKGVVESYDAAKKKHLVIYDDGDQEILYLKNQKWSPLDESELSQDEEAADQTGQEEDASTVPLTKKAKTGKQSKMDNSSAKKGSGAGSSKAKATPASKSSKTSQDDKTASKSKDSKEASREEEASSEEESEEEEPPKTVGKSGSSRSKKDISSVSKSGKSKASSKKKEEPSKATTSSKSKSGPVKSVPAKSKTGKGKAKSGSASTPASKAKESASESESEETPKEPEPATKAKSGKSQGSQSKSGKKRKR.

HEAT repeat units follow at residues 53 to 92, 99 to 136, 149 to 187, and 189 to 227; these read NALT…ITAP, DQMK…VAKV, ALLI…ESED, and PSEM…KLKT. Over residues 266–301 the composition is skewed to basic and acidic residues; that stretch reads NEKEDSQGHIKRETEVEKAAEISTPERTDAPKDESG. Disordered stretches follow at residues 266–611 and 658–873; these read NEKE…LVGS and SPLD…KRKR. Threonine 289 bears the Phosphothreonine mark. Polar residues predominate over residues 303–319; sequence SGVSNGVAQQNDSSVDT. Over residues 320–334 the composition is skewed to basic and acidic residues; that stretch reads DSMKKQDDTGAKDEP. The segment covering 336 to 348 has biased composition (polar residues); it reads QLDNPRNTDLNNT. 2 stretches are compositionally biased toward basic and acidic residues: residues 349 to 365 and 373 to 394; these read TEEK…KENE and DLSK…DSKD. Polar residues-rich tracts occupy residues 400–411 and 418–438; these read PVDSSVTAATSS and SVQI…SSPS. The segment covering 456–466 has biased composition (basic and acidic residues); the sequence is KKKESSTEEVK. Over residues 494 to 510 the composition is skewed to low complexity; the sequence is KVASSSKTKPTVPPSKK. 2 stretches are compositionally biased toward basic and acidic residues: residues 511-526 and 535-555; these read STSE…KKVV and TKPK…EESL. Acidic residues predominate over residues 661–681; it reads DESELSQDEEAADQTGQEEDA. The span at 701 to 725 shows a compositional bias: low complexity; the sequence is SSAKKGSGAGSSKAKATPASKSSKT. A compositionally biased stretch (basic and acidic residues) spans 726–746; that stretch reads SQDDKTASKSKDSKEASREEE. Residues 747–757 are compositionally biased toward acidic residues; it reads ASSEEESEEEE. Composition is skewed to low complexity over residues 795 to 814 and 822 to 831; these read KATT…PAKS and KSGSASTPAS. Residues 844 to 853 show a composition bias toward basic and acidic residues; it reads ETPKEPEPAT. Residues 854–866 show a composition bias toward low complexity; sequence KAKSGKSQGSQSK.

This sequence belongs to the PDS5 family. As to quaternary structure, interacts with the cohesin complex.

It localises to the nucleus. Functionally, cohesin cofactor dispensable during the meiotic division but playing an important role in DNA repair by homologous recombination (HR) probably by helping SMC5/SMC6 complex. Regulator of sister chromatid cohesion in mitosis which may stabilize cohesin complex association with chromatin. May couple sister chromatid cohesion during mitosis to DNA replication. Cohesion ensures that chromosome partitioning is accurate in both meiotic and mitotic cells and plays an important role in DNA repair. The protein is Sister chromatid cohesion protein PDS5 homolog C of Arabidopsis thaliana (Mouse-ear cress).